Consider the following 311-residue polypeptide: Pyrimidine-specific ribonucleoside hydrolase RihA (311 aa).

Histidine 240 is an active-site residue.

Belongs to the IUNH family. RihA subfamily.

In terms of biological role, hydrolyzes cytidine or uridine to ribose and cytosine or uracil, respectively. The polypeptide is Pyrimidine-specific ribonucleoside hydrolase RihA (Salmonella paratyphi C (strain RKS4594)).